We begin with the raw amino-acid sequence, 64 residues long: Conotoxin Im11.2 (64 aa).

The signal sequence occupies residues Met1–Ala26. 4 disulfide bridges follow: Cys27–Cys41, Cys34–Cys46, Cys40–Cys50, and Cys45–Cys54. An Aspartic acid 1-amide modification is found at Asp57. The propeptide occupies Ala61–Gln64.

This sequence belongs to the conotoxin I2 superfamily. Expressed by the venom duct.

The protein resides in the secreted. The protein is Conotoxin Im11.2 of Conus imperialis (Imperial cone).